A 178-amino-acid polypeptide reads, in one-letter code: Ribosome maturation factor RimM (178 aa).

The PRC barrel domain occupies 101-178; that stretch reads DGEYYWYQLQ…EMQVDWDADF (78 aa).

The protein belongs to the RimM family. As to quaternary structure, binds ribosomal protein uS19.

The protein localises to the cytoplasm. Its function is as follows. An accessory protein needed during the final step in the assembly of 30S ribosomal subunit, possibly for assembly of the head region. Essential for efficient processing of 16S rRNA. May be needed both before and after RbfA during the maturation of 16S rRNA. It has affinity for free ribosomal 30S subunits but not for 70S ribosomes. The polypeptide is Ribosome maturation factor RimM (Stutzerimonas stutzeri (strain A1501) (Pseudomonas stutzeri)).